Reading from the N-terminus, the 156-residue chain is Ribosomal RNA large subunit methyltransferase H (156 aa).

S-adenosyl-L-methionine-binding positions include leucine 72, glycine 104, and 123 to 128; that span reads FGAMVW.

Belongs to the RNA methyltransferase RlmH family. Homodimer.

Its subcellular location is the cytoplasm. It carries out the reaction pseudouridine(1915) in 23S rRNA + S-adenosyl-L-methionine = N(3)-methylpseudouridine(1915) in 23S rRNA + S-adenosyl-L-homocysteine + H(+). Specifically methylates the pseudouridine at position 1915 (m3Psi1915) in 23S rRNA. The chain is Ribosomal RNA large subunit methyltransferase H from Dinoroseobacter shibae (strain DSM 16493 / NCIMB 14021 / DFL 12).